The chain runs to 125 residues: Small ribosomal subunit protein uS13 (125 aa).

Positions 92–125 (RRSLPVRGQNTQTNARTRKGKRKTVAGKKKAARK) are disordered. The span at 107 to 125 (RTRKGKRKTVAGKKKAARK) shows a compositional bias: basic residues.

The protein belongs to the universal ribosomal protein uS13 family. As to quaternary structure, part of the 30S ribosomal subunit. Forms a loose heterodimer with protein S19. Forms two bridges to the 50S subunit in the 70S ribosome.

In terms of biological role, located at the top of the head of the 30S subunit, it contacts several helices of the 16S rRNA. In the 70S ribosome it contacts the 23S rRNA (bridge B1a) and protein L5 of the 50S subunit (bridge B1b), connecting the 2 subunits; these bridges are implicated in subunit movement. Contacts the tRNAs in the A and P-sites. The sequence is that of Small ribosomal subunit protein uS13 from Chlorobium luteolum (strain DSM 273 / BCRC 81028 / 2530) (Pelodictyon luteolum).